We begin with the raw amino-acid sequence, 241 residues long: DnaA regulatory inactivator Hda (241 aa).

This sequence belongs to the DnaA family. HdA subfamily. The active form seems to be an ADP-bound monomer. Forms the RIDA complex (regulatory inactivation of DnaA) of ATP-DnaA, ADP-Hda and the DNA-loaded beta sliding clamp (dnaN).

Functionally, mediates the interaction of DNA replication initiator protein DnaA with DNA polymerase subunit beta sliding clamp (dnaN). Stimulates hydrolysis of ATP-DnaA to ADP-DnaA, rendering DnaA inactive for reinitiation, a process called regulatory inhibition of DnaA or RIDA. The protein is DnaA regulatory inactivator Hda of Salmonella agona (strain SL483).